The sequence spans 121 residues: Phosphoribosyl-ATP pyrophosphatase (121 aa).

This sequence belongs to the PRA-PH family.

The protein localises to the cytoplasm. The catalysed reaction is 1-(5-phospho-beta-D-ribosyl)-ATP + H2O = 1-(5-phospho-beta-D-ribosyl)-5'-AMP + diphosphate + H(+). The protein operates within amino-acid biosynthesis; L-histidine biosynthesis; L-histidine from 5-phospho-alpha-D-ribose 1-diphosphate: step 2/9. The polypeptide is Phosphoribosyl-ATP pyrophosphatase (Burkholderia multivorans (strain ATCC 17616 / 249)).